The primary structure comprises 293 residues: Elongation factor P--(R)-beta-lysine ligase homolog (293 aa).

ATP is bound by residues 86-88, 223-224, and G272; these read RNN and EL.

The protein belongs to the class-II aminoacyl-tRNA synthetase family. EpmA subfamily. Homodimer.

This is Elongation factor P--(R)-beta-lysine ligase homolog (genX) from Aquifex aeolicus (strain VF5).